A 204-amino-acid polypeptide reads, in one-letter code: Imidazole glycerol phosphate synthase subunit HisH (204 aa).

The Glutamine amidotransferase type-1 domain occupies 1–204 (MIKIVDYGLG…MTLLKNFSEI (204 aa)). The active-site Nucleophile is Cys80. Catalysis depends on residues His186 and Glu188.

As to quaternary structure, heterodimer of HisH and HisF.

Its subcellular location is the cytoplasm. The enzyme catalyses 5-[(5-phospho-1-deoxy-D-ribulos-1-ylimino)methylamino]-1-(5-phospho-beta-D-ribosyl)imidazole-4-carboxamide + L-glutamine = D-erythro-1-(imidazol-4-yl)glycerol 3-phosphate + 5-amino-1-(5-phospho-beta-D-ribosyl)imidazole-4-carboxamide + L-glutamate + H(+). The catalysed reaction is L-glutamine + H2O = L-glutamate + NH4(+). Its pathway is amino-acid biosynthesis; L-histidine biosynthesis; L-histidine from 5-phospho-alpha-D-ribose 1-diphosphate: step 5/9. Functionally, IGPS catalyzes the conversion of PRFAR and glutamine to IGP, AICAR and glutamate. The HisH subunit catalyzes the hydrolysis of glutamine to glutamate and ammonia as part of the synthesis of IGP and AICAR. The resulting ammonia molecule is channeled to the active site of HisF. This is Imidazole glycerol phosphate synthase subunit HisH from Bdellovibrio bacteriovorus (strain ATCC 15356 / DSM 50701 / NCIMB 9529 / HD100).